The chain runs to 101 residues: Small ribosomal subunit protein uS14 (101 aa).

This sequence belongs to the universal ribosomal protein uS14 family. In terms of assembly, part of the 30S ribosomal subunit. Contacts proteins S3 and S10.

Its function is as follows. Binds 16S rRNA, required for the assembly of 30S particles and may also be responsible for determining the conformation of the 16S rRNA at the A site. This chain is Small ribosomal subunit protein uS14, found in Nitrosospira multiformis (strain ATCC 25196 / NCIMB 11849 / C 71).